Reading from the N-terminus, the 258-residue chain is Indole-3-glycerol phosphate synthase (258 aa).

It belongs to the TrpC family.

The enzyme catalyses 1-(2-carboxyphenylamino)-1-deoxy-D-ribulose 5-phosphate + H(+) = (1S,2R)-1-C-(indol-3-yl)glycerol 3-phosphate + CO2 + H2O. Its pathway is amino-acid biosynthesis; L-tryptophan biosynthesis; L-tryptophan from chorismate: step 4/5. The protein is Indole-3-glycerol phosphate synthase of Campylobacter jejuni subsp. jejuni serotype O:23/36 (strain 81-176).